Consider the following 322-residue polypeptide: Phosphoserine phosphatase (322 aa).

Position 10–12 (P10–D12) interacts with substrate. Mg(2+) is bound by residues D12, D116, and D118. The Nucleophile role is filled by D116. Residue D118 is the Proton donor of the active site. Substrate contacts are provided by residues E125, R161, S204–G205, and K249. Residue D272 participates in Mg(2+) binding. Substrate is bound at residue N275.

Belongs to the HAD-like hydrolase superfamily. SerB family. The cofactor is Mg(2+).

The catalysed reaction is O-phospho-L-serine + H2O = L-serine + phosphate. It catalyses the reaction O-phospho-D-serine + H2O = D-serine + phosphate. The protein operates within amino-acid biosynthesis; L-serine biosynthesis; L-serine from 3-phospho-D-glycerate: step 3/3. Catalyzes the dephosphorylation of phosphoserine (P-Ser). The polypeptide is Phosphoserine phosphatase (serB) (Escherichia coli O157:H7).